The following is a 373-amino-acid chain: tRNA-specific 2-thiouridylase MnmA (373 aa).

ATP-binding positions include 12–19 and Met-38; that span reads GMSGGVDS. The interval 98–100 is interaction with target base in tRNA; it reads NPD. Cys-103 (nucleophile) is an active-site residue. Cysteines 103 and 200 form a disulfide. Gly-127 is an ATP binding site. The interval 150 to 152 is interaction with tRNA; that stretch reads KDQ. Cys-200 functions as the Cysteine persulfide intermediate in the catalytic mechanism. The segment at 312-313 is interaction with tRNA; that stretch reads RY.

Belongs to the MnmA/TRMU family.

The protein localises to the cytoplasm. The catalysed reaction is S-sulfanyl-L-cysteinyl-[protein] + uridine(34) in tRNA + AH2 + ATP = 2-thiouridine(34) in tRNA + L-cysteinyl-[protein] + A + AMP + diphosphate + H(+). In terms of biological role, catalyzes the 2-thiolation of uridine at the wobble position (U34) of tRNA, leading to the formation of s(2)U34. The sequence is that of tRNA-specific 2-thiouridylase MnmA from Streptococcus pyogenes serotype M18 (strain MGAS8232).